A 211-amino-acid polypeptide reads, in one-letter code: Ras-related protein RABB1c (211 aa).

Serine 2 is subject to N-acetylserine. 13 to 21 is a GTP binding site; it reads GDTGVGKSC. Residues 35 to 43 carry the Effector region motif; it reads HDLTIGVEF. Residues 61-65, 119-122, and 149-151 each bind GTP; these read DTAGQ, NKCD, and SAK. 2 S-geranylgeranyl cysteine lipidation sites follow: cysteine 209 and cysteine 210.

This sequence belongs to the small GTPase superfamily. Rab family.

The protein resides in the cell membrane. In terms of biological role, intracellular vesicle trafficking and protein transport. This Arabidopsis thaliana (Mouse-ear cress) protein is Ras-related protein RABB1c (RABB1C).